Here is a 188-residue protein sequence, read N- to C-terminus: GMP synthase [glutamine-hydrolyzing] subunit A (188 aa).

A Glutamine amidotransferase type-1 domain is found at 3 to 188 (KVLVVAFGGQ…FQNFVELCKR (186 aa)). Cys-79 acts as the Nucleophile in catalysis. Catalysis depends on residues His-166 and Glu-168.

In terms of assembly, heterodimer composed of a glutamine amidotransferase subunit (A) and a GMP-binding subunit (B).

The enzyme catalyses XMP + L-glutamine + ATP + H2O = GMP + L-glutamate + AMP + diphosphate + 2 H(+). Its pathway is purine metabolism; GMP biosynthesis; GMP from XMP (L-Gln route): step 1/1. In terms of biological role, catalyzes the synthesis of GMP from XMP. In Ignicoccus hospitalis (strain KIN4/I / DSM 18386 / JCM 14125), this protein is GMP synthase [glutamine-hydrolyzing] subunit A.